We begin with the raw amino-acid sequence, 71 residues long: Putative antitoxin VapB14 (71 aa).

In terms of biological role, putative antitoxin component of a possible type II toxin-antitoxin (TA) system. The cognate toxin is VapB14. The polypeptide is Putative antitoxin VapB14 (vapB14) (Mycobacterium tuberculosis (strain ATCC 25618 / H37Rv)).